Consider the following 388-residue polypeptide: Formate-dependent phosphoribosylglycinamide formyltransferase (388 aa).

N(1)-(5-phospho-beta-D-ribosyl)glycinamide-binding positions include 20–21 (EL) and glutamate 80. Residues arginine 112, lysine 153, 158-163 (SSGKGQ), 193-196 (EEFV), and glutamate 201 each bind ATP. Residues 117-306 (RLASEKLGLR…EFEIHVRSIL (190 aa)) form the ATP-grasp domain. Glutamate 265 and glutamate 277 together coordinate Mg(2+). N(1)-(5-phospho-beta-D-ribosyl)glycinamide contacts are provided by residues aspartate 284, lysine 352, and 359 to 360 (RR).

This sequence belongs to the PurK/PurT family. As to quaternary structure, homodimer.

It carries out the reaction N(1)-(5-phospho-beta-D-ribosyl)glycinamide + formate + ATP = N(2)-formyl-N(1)-(5-phospho-beta-D-ribosyl)glycinamide + ADP + phosphate + H(+). The protein operates within purine metabolism; IMP biosynthesis via de novo pathway; N(2)-formyl-N(1)-(5-phospho-D-ribosyl)glycinamide from N(1)-(5-phospho-D-ribosyl)glycinamide (formate route): step 1/1. Involved in the de novo purine biosynthesis. Catalyzes the transfer of formate to 5-phospho-ribosyl-glycinamide (GAR), producing 5-phospho-ribosyl-N-formylglycinamide (FGAR). Formate is provided by PurU via hydrolysis of 10-formyl-tetrahydrofolate. The chain is Formate-dependent phosphoribosylglycinamide formyltransferase from Methanococcus vannielii (strain ATCC 35089 / DSM 1224 / JCM 13029 / OCM 148 / SB).